We begin with the raw amino-acid sequence, 557 residues long: 2-succinyl-5-enolpyruvyl-6-hydroxy-3-cyclohexene-1-carboxylate synthase (557 aa).

It belongs to the TPP enzyme family. MenD subfamily. As to quaternary structure, homodimer. The cofactor is Mg(2+). It depends on Mn(2+) as a cofactor. Requires thiamine diphosphate as cofactor.

It carries out the reaction isochorismate + 2-oxoglutarate + H(+) = 5-enolpyruvoyl-6-hydroxy-2-succinyl-cyclohex-3-ene-1-carboxylate + CO2. Its pathway is quinol/quinone metabolism; 1,4-dihydroxy-2-naphthoate biosynthesis; 1,4-dihydroxy-2-naphthoate from chorismate: step 2/7. The protein operates within quinol/quinone metabolism; menaquinone biosynthesis. Catalyzes the thiamine diphosphate-dependent decarboxylation of 2-oxoglutarate and the subsequent addition of the resulting succinic semialdehyde-thiamine pyrophosphate anion to isochorismate to yield 2-succinyl-5-enolpyruvyl-6-hydroxy-3-cyclohexene-1-carboxylate (SEPHCHC). The chain is 2-succinyl-5-enolpyruvyl-6-hydroxy-3-cyclohexene-1-carboxylate synthase from Serratia proteamaculans (strain 568).